The following is a 950-amino-acid chain: Coiled-coil domain-containing protein 80 (950 aa).

The signal sequence occupies residues 1–21; it reads MTWRMGPRFTMLLAMWLVCGS. 3 disordered regions span residues 28–64, 88–119, and 289–609; these read TIRGSHGGRKVPLVSPDSSRPARFLRHTGRSRGIERS, PTEPPARSDINGAAVRPEQRPAARGSPREMIR, and QVVA…QSPK. Basic and acidic residues-rich tracts occupy residues 104–119 and 308–317; these read PEQRPAARGSPREMIR and SEKKKEDPRR. The segment covering 348–374 has biased composition (low complexity); it reads PRATTLPPAPATTVTRSTSRAVTVAAR. Polar residues predominate over residues 376–385; the sequence is MTTTAFPTTQ. Residues 418-428 are compositionally biased toward basic and acidic residues; sequence SRKDQHRERPQ. Polar residues predominate over residues 435 to 454; it reads KATSLESFTNAPPTTISEPS. Basic and acidic residues-rich tracts occupy residues 462–478, 487–499, and 538–582; these read RFRDNRMDRREHGHRDP, PAKEKPPKKKAQD, and KKHE…EKEK. Glycyl lysine isopeptide (Lys-Gly) (interchain with G-Cter in SUMO2) cross-links involve residues lysine 545 and lysine 548. Residues 560–587 are a coiled coil; the sequence is DKLLKSEKQMKKSEKKSKQEKEKSKKKK. Positions 598-609 are enriched in polar residues; it reads KPTNKHFTQSPK.

The protein belongs to the CCDC80 family. In terms of assembly, binds to various extracellular matrix proteins. Phosphorylated. Expressed in dermal papilla and dermal fibroblasts (at protein level). Expressed in heart, thymus, placenta, pancreas, colon, epithelium, spleen and osteoblasts.

The protein localises to the secreted. It is found in the extracellular space. The protein resides in the extracellular matrix. Functionally, promotes cell adhesion and matrix assembly. This is Coiled-coil domain-containing protein 80 (CCDC80) from Homo sapiens (Human).